The following is a 65-amino-acid chain: MTDEKCVRCGGDQLVEGAVVWNAPLRFKREGAGHFNRGTQVNAVACETCGHIDLYLESRARGSTK.

This is an uncharacterized protein from Mycobacterium tuberculosis (strain ATCC 25618 / H37Rv).